Reading from the N-terminus, the 172-residue chain is Inorganic pyrophosphatase (172 aa).

Positions 26, 40, and 52 each coordinate substrate. 3 residues coordinate Mg(2+): D62, D67, and D99. Y138 provides a ligand contact to substrate.

Belongs to the PPase family. In terms of assembly, homohexamer. Requires Mg(2+) as cofactor.

It is found in the cytoplasm. The enzyme catalyses diphosphate + H2O = 2 phosphate + H(+). Catalyzes the hydrolysis of inorganic pyrophosphate (PPi) forming two phosphate ions. The sequence is that of Inorganic pyrophosphatase from Saccharolobus solfataricus (strain ATCC 35092 / DSM 1617 / JCM 11322 / P2) (Sulfolobus solfataricus).